We begin with the raw amino-acid sequence, 239 residues long: Pyridoxine 5'-phosphate synthase (239 aa).

N7 lines the 3-amino-2-oxopropyl phosphate pocket. Residue 9–10 (DH) coordinates 1-deoxy-D-xylulose 5-phosphate. R18 serves as a coordination point for 3-amino-2-oxopropyl phosphate. Catalysis depends on H43, which acts as the Proton acceptor. 2 residues coordinate 1-deoxy-D-xylulose 5-phosphate: R45 and H50. The Proton acceptor role is filled by E70. T100 contacts 1-deoxy-D-xylulose 5-phosphate. The active-site Proton donor is H191. Residues G192 and 213–214 (GH) each bind 3-amino-2-oxopropyl phosphate.

It belongs to the PNP synthase family. In terms of assembly, homooctamer; tetramer of dimers.

Its subcellular location is the cytoplasm. It carries out the reaction 3-amino-2-oxopropyl phosphate + 1-deoxy-D-xylulose 5-phosphate = pyridoxine 5'-phosphate + phosphate + 2 H2O + H(+). It participates in cofactor biosynthesis; pyridoxine 5'-phosphate biosynthesis; pyridoxine 5'-phosphate from D-erythrose 4-phosphate: step 5/5. Its function is as follows. Catalyzes the complicated ring closure reaction between the two acyclic compounds 1-deoxy-D-xylulose-5-phosphate (DXP) and 3-amino-2-oxopropyl phosphate (1-amino-acetone-3-phosphate or AAP) to form pyridoxine 5'-phosphate (PNP) and inorganic phosphate. In Desulforapulum autotrophicum (strain ATCC 43914 / DSM 3382 / VKM B-1955 / HRM2) (Desulfobacterium autotrophicum), this protein is Pyridoxine 5'-phosphate synthase.